A 252-amino-acid chain; its full sequence is Transmembrane ascorbate-dependent reductase CYB561 (252 aa).

At M1 the chain carries N-acetylmethionine. Residues 1–17 (MESPAGRTPAPGALPYY) are Cytoplasmic-facing. Residues 18–38 (VAFSQLLGLTVVAVTGAWLGA) form a helical membrane-spanning segment. A Cytochrome b561 domain is found at 20-221 (FSQLLGLTVV…FGAVVLYILT (202 aa)). The Vesicular portion of the chain corresponds to 39–52 (YRGGIAWESALQFN). Residues 53-73 (VHPLCMIIGLVFLQGDALLVY) traverse the membrane as a helical segment. The heme b site is built by H54, R74, and K81. At 74–85 (RVFRNEAKRTTK) the chain is on the cytoplasmic side. L-ascorbate is bound by residues K81 and K85. Residues 86-106 (ILHGLLHVLAFVIALVGLVAV) traverse the membrane as a helical segment. Heme b is bound by residues H88, 117-120 (DLYS), and H122. The Vesicular portion of the chain corresponds to 107–125 (FDYHRKKGIADLYSLHSWC). The helical transmembrane segment at 126–146 (GILVFVLFLAQWLVGLGFFLF) threads the bilayer. Residues 147 to 159 (PGASFSLRSRYRP) are Cytoplasmic-facing. R154 provides a ligand contact to L-ascorbate. A helical transmembrane segment spans residues 160-180 (QHVFFGAAIFLLSVGTALLGL). 2 residues coordinate heme b: H161 and E182. Topologically, residues 181-199 (KEALLFQLGTKYSAFESEG) are vesicular. A helical transmembrane segment spans residues 200 to 220 (VLANVLGLLLVAFGAVVLYIL). The Cytoplasmic segment spans residues 221–252 (TRADWKRPLQAEEQALSMDFKTLTEGDSPSSQ). K226 lines the heme b pocket. Residues S248 and S250 each carry the phosphoserine modification.

Requires heme b as cofactor.

Its subcellular location is the cytoplasmic vesicle. The protein localises to the secretory vesicle. The protein resides in the chromaffin granule membrane. The catalysed reaction is monodehydro-L-ascorbate radical(out) + L-ascorbate(in) = monodehydro-L-ascorbate radical(in) + L-ascorbate(out). Its function is as follows. Transmembrane reductase that uses ascorbate as an electron donor in the cytoplasm and transfers electrons across membranes to reduce monodehydro-L-ascorbate radical in the lumen of secretory vesicles. It is therefore involved the regeneration and homeostasis within secretory vesicles of ascorbate which in turn provides reducing equivalents needed to support the activity of intravesicular enzymes. In Sus scrofa (Pig), this protein is Transmembrane ascorbate-dependent reductase CYB561 (CYB561).